Consider the following 2547-residue polypeptide: Lovastatin diketide synthase mokB (2547 aa).

Residues 10 to 430 (PTPIAVVGMG…GANAHAIVER (421 aa)) form the Ketosynthase family 3 (KS3) domain. Catalysis depends on for beta-ketoacyl synthase activity residues Cys183, His318, and His353. The tract at residues 545 to 890 (VFTGQGAQWF…MDLLQGGYPV (346 aa)) is acyl and malonyl transferase. The For malonyltransferase activity role is filled by Ser635. Residues 941–1079 (HDLIGVQEPL…GLIRAQVDHP (139 aa)) are N-terminal hotdog fold. The 312-residue stretch at 941–1252 (HDLIGVQEPL…FQSLGAVISD (312 aa)) folds into the PKS/mFAS DH domain. The Proton acceptor; for dehydratase activity role is filled by His973. The tract at residues 973–985 (HVVGSRILFPGAG) is dehydratase-like. Residues 1095–1252 (SRKMAPQDLW…FQSLGAVISD (158 aa)) are C-terminal hotdog fold. The Proton donor; for dehydratase activity role is filled by Asp1160. Cys1340 and Cys1379 form a disulfide bridge. The tract at residues 1510–1547 (YDVVLACQVLHATSNMQRTLNNVRKLLKPGGKLILVET) is methyltransferase. Residues 2459 to 2541 (ASTEEEATAL…EVAEVVVKKY (83 aa)) enclose the Carrier domain. An O-(pantetheine 4'-phosphoryl)serine modification is found at Ser2501.

Requires pantetheine 4'-phosphate as cofactor.

The enzyme catalyses holo-[2-methylbutanoate polyketide synthase] + 2 malonyl-CoA + S-adenosyl-L-methionine + 2 NADPH + 3 H(+) = (S)-2-methylbutanoyl-[2-methylbutanoate polyketide synthase] + S-adenosyl-L-homocysteine + 2 CO2 + 2 NADP(+) + 2 CoA + H2O. Its pathway is polyketide biosynthesis; lovastatin biosynthesis. Its function is as follows. Diketide synthase; part of the gene cluster that mediates the biosynthesis of monakolin K, also known as lovastatin, and which acts as a potent competitive inhibitor of HMG-CoA reductase. Monakolin K biosynthesis is performed in two stages. The first stage is catalyzed by the nonaketide synthase mokA, which belongs to type I polyketide synthases and catalyzes the iterative nine-step formation of the polyketide. This PKS stage completed by the action of dehydrogenase mokE, which catalyzes the NADPH-dependent reduction of the unsaturated tetra-, penta- and heptaketide intermediates that arise during the mokA-mediated biosynthesis of the nonaketide chain and leads to dihydromonacolin L. Covalently bound dihydromonacolin L is released from mokA by the mokD esterase. Conversion of dihydromonacolin L into monacolin L and then monacolin J is subsequently performed with the participation of molecular oxygen and P450 monoogygenase mokC. Finally, mokF performs the conversion of monacoline J to monacoline K through the addition of the side-chain diketide moiety (2R)-2-methylbutanoate produced by the diketide synthase mokB. This is Lovastatin diketide synthase mokB from Monascus pilosus (Red mold).